The following is a 96-amino-acid chain: Co-chaperonin GroES (96 aa).

This sequence belongs to the GroES chaperonin family. As to quaternary structure, heptamer of 7 subunits arranged in a ring. Interacts with the chaperonin GroEL.

Its subcellular location is the cytoplasm. Functionally, together with the chaperonin GroEL, plays an essential role in assisting protein folding. The GroEL-GroES system forms a nano-cage that allows encapsulation of the non-native substrate proteins and provides a physical environment optimized to promote and accelerate protein folding. GroES binds to the apical surface of the GroEL ring, thereby capping the opening of the GroEL channel. The chain is Co-chaperonin GroES from Actinobacillus pleuropneumoniae serotype 7 (strain AP76).